The sequence spans 332 residues: Tetraacyldisaccharide 4'-kinase (332 aa).

Residue 55–62 (GVGGSGKT) coordinates ATP.

It belongs to the LpxK family.

The enzyme catalyses a lipid A disaccharide + ATP = a lipid IVA + ADP + H(+). Its pathway is glycolipid biosynthesis; lipid IV(A) biosynthesis; lipid IV(A) from (3R)-3-hydroxytetradecanoyl-[acyl-carrier-protein] and UDP-N-acetyl-alpha-D-glucosamine: step 6/6. Functionally, transfers the gamma-phosphate of ATP to the 4'-position of a tetraacyldisaccharide 1-phosphate intermediate (termed DS-1-P) to form tetraacyldisaccharide 1,4'-bis-phosphate (lipid IVA). The sequence is that of Tetraacyldisaccharide 4'-kinase from Acidithiobacillus ferrooxidans (strain ATCC 53993 / BNL-5-31) (Leptospirillum ferrooxidans (ATCC 53993)).